A 268-amino-acid polypeptide reads, in one-letter code: Interleukin-1 beta (268 aa).

Residues Met1–Asp115 constitute a propeptide that is removed on maturation.

This sequence belongs to the IL-1 family. In terms of assembly, monomer. In its precursor form, weakly interacts with full-length MEFV; the mature cytokine does not interact at all. Interacts with integrins ITGAV:ITGBV and ITGA5:ITGB1; integrin-binding is required for IL1B signaling. Interacts with cargo receptor TMED10; the interaction is direct and is required for the secretion of IL1B mature form. Interacts with HSP90AB1; the interaction facilitates cargo translocation into the ERGIC. Interacts with HSP90B1; the interaction facilitates cargo translocation into the ERGIC.

The protein resides in the cytoplasm. It localises to the cytosol. It is found in the secreted. Its subcellular location is the lysosome. The protein localises to the extracellular exosome. Potent pro-inflammatory cytokine. Initially discovered as the major endogenous pyrogen, induces prostaglandin synthesis, neutrophil influx and activation, T-cell activation and cytokine production, B-cell activation and antibody production, and fibroblast proliferation and collagen production. Promotes Th17 differentiation of T-cells. Synergizes with IL12/interleukin-12 to induce IFNG synthesis from T-helper 1 (Th1) cells. Plays a role in angiogenesis by inducing VEGF production synergistically with TNF and IL6. Involved in transduction of inflammation downstream of pyroptosis: its mature form is specifically released in the extracellular milieu by passing through the gasdermin-D (GSDMD) pore. The polypeptide is Interleukin-1 beta (IL1B) (Equus caballus (Horse)).